A 957-amino-acid chain; its full sequence is Protein translocase subunit SecA (957 aa).

ATP is bound by residues Q87, G105 to T109, and D512. The interval A924–K957 is disordered. Zn(2+) contacts are provided by C943, C945, C954, and C955.

Belongs to the SecA family. As to quaternary structure, monomer and homodimer. Part of the essential Sec protein translocation apparatus which comprises SecA, SecYEG and auxiliary proteins SecDF-YajC and YidC. It depends on Zn(2+) as a cofactor.

The protein localises to the cell inner membrane. The protein resides in the cytoplasm. It carries out the reaction ATP + H2O + cellular proteinSide 1 = ADP + phosphate + cellular proteinSide 2.. Part of the Sec protein translocase complex. Interacts with the SecYEG preprotein conducting channel. Has a central role in coupling the hydrolysis of ATP to the transfer of proteins into and across the cell membrane, serving as an ATP-driven molecular motor driving the stepwise translocation of polypeptide chains across the membrane. The sequence is that of Protein translocase subunit SecA from Geobacter sp. (strain M21).